A 257-amino-acid chain; its full sequence is Hydroxyacylglutathione hydrolase (257 aa).

Zn(2+)-binding residues include histidine 55, histidine 57, aspartate 59, histidine 60, histidine 112, aspartate 129, and histidine 167.

It belongs to the metallo-beta-lactamase superfamily. Glyoxalase II family. As to quaternary structure, monomer. Requires Zn(2+) as cofactor.

It catalyses the reaction an S-(2-hydroxyacyl)glutathione + H2O = a 2-hydroxy carboxylate + glutathione + H(+). It functions in the pathway secondary metabolite metabolism; methylglyoxal degradation; (R)-lactate from methylglyoxal: step 2/2. Its function is as follows. Thiolesterase that catalyzes the hydrolysis of S-D-lactoyl-glutathione to form glutathione and D-lactic acid. This chain is Hydroxyacylglutathione hydrolase, found in Pseudoalteromonas translucida (strain TAC 125).